The primary structure comprises 673 residues: Protein kinase C delta type (673 aa).

One can recognise a C2 domain in the interval 1–106 (MAPFLRISFN…KNNGKAEFWL (106 aa)). Phosphothreonine occurs at positions 43 and 50. Tyrosine 64 bears the Phosphotyrosine mark. Serine 130 is modified (phosphoserine). The residue at position 141 (threonine 141) is a Phosphothreonine. Tyrosine 155 bears the Phosphotyrosine mark. Residues 158-208 (NHEFIATFFGQPTFCSVCKEFVWGLNKQGYKCRQCNAAIHKKCIDKIIGRC) form a Phorbol-ester/DAG-type 1 zinc finger. The residue at position 218 (threonine 218) is a Phosphothreonine. Residues 230 to 280 (PHRFKVYNYMSPTFCDHCGTLLWGLVKQGLKCEDCGMNVHHKCREKVANLC) form a Phorbol-ester/DAG-type 2 zinc finger. At serine 299 the chain carries Phosphoserine; by autocatalysis. Phosphotyrosine; by SRC is present on residues tyrosine 311 and tyrosine 332. The Protein kinase domain maps to 347-601 (FTFQKVLGKG…TGNIRLHPFF (255 aa)). 353–361 (LGKGSFGKV) is a binding site for ATP. Tyrosine 372 carries the phosphotyrosine modification. Lysine 376 contributes to the ATP binding site. At threonine 449 the chain carries Phosphothreonine. Aspartate 471 functions as the Proton acceptor in the catalytic mechanism. A Phosphoserine modification is found at serine 504. Threonine 505 bears the Phosphothreonine; by autocatalysis mark. A Phosphotyrosine modification is found at tyrosine 565. The AGC-kinase C-terminal domain maps to 602–673 (KTINWNLLEK…VNPKYEQFLE (72 aa)). Phosphoserine is present on residues serine 643, serine 652, and serine 662.

This sequence belongs to the protein kinase superfamily. AGC Ser/Thr protein kinase family. PKC subfamily. As to quaternary structure, interacts with PDPK1 (via N-terminal region). Interacts with RAD9A. Interacts with CDCP1. Interacts with MUC1. Interacts with VASP. Interacts with CAVIN3. Interacts with PRKD2 (via N-terminus and zing-finger domain 1 and 2) in response to oxidative stress; the interaction is independent of PRKD2 tyrosine phosphorylation. Interacts with PLSC3; interaction is enhanced by UV irradiation. In terms of processing, autophosphorylated and/or phosphorylated at Thr-505, within the activation loop; phosphorylation at Thr-505 is not a prerequisite for enzymatic activity. Autophosphorylated at Ser-299. Upon TNFSF10/TRAIL treatment, phosphorylated at Tyr-155; phosphorylation is required for its translocation to the endoplasmic reticulum and cleavage by caspase-3. Phosphorylated at Tyr-311, Tyr-332 and Tyr-565; phosphorylation of Tyr-311 and Tyr-565 following thrombin or zymosan stimulation potentiates its kinase activity. Phosphorylated by protein kinase PDPK1; phosphorylation is inhibited by the apoptotic C-terminal cleavage product of PKN2. Phosphorylated at Tyr-311 and Tyr-332 by SRC; phosphorylation leads to enhanced autophosphorylation at Thr-505. Phosphorylated at Tyr-311 through a SYK and SRC mechanism downstream of C-type lectin receptors activation, promoting its activation. Post-translationally, proteolytically cleaved into a catalytic subunit and a regulatory subunit by caspase-3 during apoptosis which results in kinase activation.

It is found in the cytoplasm. The protein resides in the nucleus. Its subcellular location is the perinuclear region. The protein localises to the cell membrane. It localises to the mitochondrion. It is found in the endomembrane system. It catalyses the reaction L-seryl-[protein] + ATP = O-phospho-L-seryl-[protein] + ADP + H(+). The enzyme catalyses L-threonyl-[protein] + ATP = O-phospho-L-threonyl-[protein] + ADP + H(+). It carries out the reaction L-tyrosyl-[protein] + ATP = O-phospho-L-tyrosyl-[protein] + ADP + H(+). With respect to regulation, novel PKCs (PRKCD, PRKCE, PRKCH and PRKCQ) are calcium-insensitive, but activated by diacylglycerol (DAG) and phosphatidylserine. Three specific sites; Thr-505 (activation loop of the kinase domain), Ser-643 (turn motif) and Ser-662 (hydrophobic region), need to be phosphorylated for its full activation. Activated by caspase-3 (CASP3) cleavage during apoptosis. After cleavage, the pseudosubstrate motif in the regulatory subunit is released from the substrate recognition site of the catalytic subunit, which enables PRKCD to become constitutively activated. The catalytic subunit which displays properties of a sphingosine-dependent protein kinase is activated by D-erythro-sphingosine (Sph) or N,N-dimethyl-D-erythrosphingosine (DMS) or N,N,N-trimethyl-D-erythrosphingosine (TMS), but not by ceramide or Sph-1-P and is strongly inhibited by phosphatidylserine. Calcium-independent, phospholipid- and diacylglycerol (DAG)-dependent serine/threonine-protein kinase that plays contrasting roles in cell death and cell survival by functioning as a pro-apoptotic protein during DNA damage-induced apoptosis, but acting as an anti-apoptotic protein during cytokine receptor-initiated cell death, is involved in tumor suppression, is required for oxygen radical production by NADPH oxidase and acts as a positive or negative regulator in platelet functional responses. Upon DNA damage, activates the promoter of the death-promoting transcription factor BCLAF1/Btf to trigger BCLAF1-mediated p53/TP53 gene transcription and apoptosis. In response to oxidative stress, interact with and activate CHUK/IKKA in the nucleus, causing the phosphorylation of p53/TP53. In the case of ER stress or DNA damage-induced apoptosis, can form a complex with the tyrosine-protein kinase ABL1 which trigger apoptosis independently of p53/TP53. In cytosol can trigger apoptosis by activating MAPK11 or MAPK14, inhibiting AKT1 and decreasing the level of X-linked inhibitor of apoptosis protein (XIAP), whereas in nucleus induces apoptosis via the activation of MAPK8 or MAPK9. Upon ionizing radiation treatment, is required for the activation of the apoptosis regulators BAX and BAK, which trigger the mitochondrial cell death pathway. Can phosphorylate MCL1 and target it for degradation which is sufficient to trigger for BAX activation and apoptosis. Is required for the control of cell cycle progression both at G1/S and G2/M phases. Mediates phorbol 12-myristate 13-acetate (PMA)-induced inhibition of cell cycle progression at G1/S phase by up-regulating the CDK inhibitor CDKN1A/p21 and inhibiting the cyclin CCNA2 promoter activity. In response to UV irradiation can phosphorylate CDK1, which is important for the G2/M DNA damage checkpoint activation. Can protect glioma cells from the apoptosis induced by TNFSF10/TRAIL, probably by inducing increased phosphorylation and subsequent activation of AKT1. Can also act as tumor suppressor upon mitogenic stimulation with PMA or TPA. In N-formyl-methionyl-leucyl-phenylalanine (fMLP)-treated cells, is required for NCF1 (p47-phox) phosphorylation and activation of NADPH oxidase activity, and regulates TNF-elicited superoxide anion production in neutrophils, by direct phosphorylation and activation of NCF1 or indirectly through MAPK1/3 (ERK1/2) signaling pathways. Involved in antifungal immunity by mediating phosphorylation and activation of CARD9 downstream of C-type lectin receptors activation, promoting interaction between CARD9 and BCL10, followed by activation of NF-kappa-B and MAP kinase p38 pathways. May also play a role in the regulation of NADPH oxidase activity in eosinophil after stimulation with IL5, leukotriene B4 or PMA. In collagen-induced platelet aggregation, acts a negative regulator of filopodia formation and actin polymerization by interacting with and negatively regulating VASP phosphorylation. Downstream of PAR1, PAR4 and CD36/GP4 receptors, regulates differentially platelet dense granule secretion; acts as a positive regulator in PAR-mediated granule secretion, whereas it negatively regulates CD36/GP4-mediated granule release. Phosphorylates MUC1 in the C-terminal and regulates the interaction between MUC1 and beta-catenin. The catalytic subunit phosphorylates 14-3-3 proteins (YWHAB, YWHAZ and YWHAH) in a sphingosine-dependent fashion. Phosphorylates ELAVL1 in response to angiotensin-2 treatment. Phosphorylates mitochondrial phospholipid scramblase 3 (PLSCR3), resulting in increased cardiolipin expression on the mitochondrial outer membrane which facilitates apoptosis. Phosphorylates SMPD1 which induces SMPD1 secretion. In terms of biological role, truncated isoform 2 is inactive. This is Protein kinase C delta type from Rattus norvegicus (Rat).